Consider the following 113-residue polypeptide: U11-theraphotoxin-Hhn1a (113 aa).

The first 21 residues, 1–21 (MNTVRVTFLLVFVLAVSLGRA), serve as a signal peptide directing secretion. Positions 22–74 (DKEENRMEMQEKTEQGKSYLDFAENLLLQKLEELEAKLLEEDSEESRNSRQKR) are excised as a propeptide. The segment at 61 to 83 (EEDSEESRNSRQKRCIGEGVPCD) is disordered. Disulfide bonds link cysteine 75-cysteine 90, cysteine 82-cysteine 95, and cysteine 89-cysteine 110.

Belongs to the neurotoxin 14 (magi-1) family. 01 (HNTX-16) subfamily. As to expression, expressed by the venom gland.

It localises to the secreted. Probable ion channel inhibitor. The sequence is that of U11-theraphotoxin-Hhn1a from Cyriopagopus hainanus (Chinese bird spider).